A 649-amino-acid polypeptide reads, in one-letter code: MSSIKITFPDNSVKEFDAGVTTAEIAKSISISLAKKAVAGKVDGNFVDLNQPLKEDGSIEIITKDSNDGLVVLWRTAAQVLANALHELYPNMKFGMGDVTEHGFYFDTDNSESQVAETDFEKISQKMSEIIKANLPIERVEFSEEEALNLVSGDEYQEELVRDVANKNNGRVVAYKQGDFIDITDGVVLSSTGEVKIFKLLSVAGAYWKGASSNPMLQRIYGTAFYKQKDLDAELQRQKEARERDHRVIGNELDLFFVDPKVGAGLPYWMPNGATIRRVIERYIIDKEVAWGFQHVYTPVLANLNLYKQSGHWDHYREDMFPPMDMGDGEMLELRPMNCPSHIQVYNHHKRSYRELPLRIAELGMMHRYEKSGALTGLSRVREMTLNDGHDFIEPDHIEDEIKTLIKLMTEVYNDFDITDYRFRLSYRDPKNTEKYFDDDEMWEKSQSKLKAAMDDMGLEYFEAEGEAAFYGPKIDVQTKTALGGEETLSTIQLDFLLPERFDLKYIGADGEEHRPVMVHRGIVSTMERFTAYLTEMYKGAFPTWLAPHQVDIIPVKNDLHMDYVNDLSSKLRAHGIRVTVDDRNEKMGYKIRQAQVNKIPYTLVIGDEEVSNGTVTVRKYGEEKTNTMTKAEFKNLLFEDIENYSREK.

Positions 1–63 (MSSIKITFPD…KEDGSIEIIT (63 aa)) constitute a TGS domain. A catalytic region spans residues 245 to 543 (DHRVIGNELD…LTEMYKGAFP (299 aa)). 3 residues coordinate Zn(2+): C339, H390, and H520.

Belongs to the class-II aminoacyl-tRNA synthetase family. Homodimer. The cofactor is Zn(2+).

Its subcellular location is the cytoplasm. The catalysed reaction is tRNA(Thr) + L-threonine + ATP = L-threonyl-tRNA(Thr) + AMP + diphosphate + H(+). Functionally, catalyzes the attachment of threonine to tRNA(Thr) in a two-step reaction: L-threonine is first activated by ATP to form Thr-AMP and then transferred to the acceptor end of tRNA(Thr). Also edits incorrectly charged L-seryl-tRNA(Thr). This Ligilactobacillus salivarius (strain UCC118) (Lactobacillus salivarius) protein is Threonine--tRNA ligase.